We begin with the raw amino-acid sequence, 357 residues long: Alanine racemase (357 aa).

K34 serves as the catalytic Proton acceptor; specific for D-alanine. At K34 the chain carries N6-(pyridoxal phosphate)lysine. R129 is a substrate binding site. Catalysis depends on Y254, which acts as the Proton acceptor; specific for L-alanine. M302 is a substrate binding site.

The protein belongs to the alanine racemase family. Requires pyridoxal 5'-phosphate as cofactor.

It carries out the reaction L-alanine = D-alanine. It participates in amino-acid biosynthesis; D-alanine biosynthesis; D-alanine from L-alanine: step 1/1. Functionally, catalyzes the interconversion of L-alanine and D-alanine. Likely plays an important role in supplying D-alanine, which is an indispensable constituent in the biosynthesis of bacterial cell-wall peptidoglycan. This is Alanine racemase from Aeromonas hydrophila subsp. hydrophila (strain ATCC 7966 / DSM 30187 / BCRC 13018 / CCUG 14551 / JCM 1027 / KCTC 2358 / NCIMB 9240 / NCTC 8049).